The chain runs to 126 residues: UPF0538 protein C2orf76 homolog (126 aa).

Belongs to the UPF0538 family.

This chain is UPF0538 protein C2orf76 homolog, found in Danio rerio (Zebrafish).